We begin with the raw amino-acid sequence, 135 residues long: ATP synthase epsilon chain (135 aa).

Belongs to the ATPase epsilon chain family. As to quaternary structure, F-type ATPases have 2 components, CF(1) - the catalytic core - and CF(0) - the membrane proton channel. CF(1) has five subunits: alpha(3), beta(3), gamma(1), delta(1), epsilon(1). CF(0) has three main subunits: a, b and c.

The protein resides in the cell inner membrane. In terms of biological role, produces ATP from ADP in the presence of a proton gradient across the membrane. This chain is ATP synthase epsilon chain, found in Rhizobium johnstonii (strain DSM 114642 / LMG 32736 / 3841) (Rhizobium leguminosarum bv. viciae).